We begin with the raw amino-acid sequence, 476 residues long: Lactate utilization protein B 1 (476 aa).

4Fe-4S ferredoxin-type domains follow at residues 301–331 and 350–379; these read GTEF…GHAY and YDEY…LHDL. Residues C310, C313, C316, C320, C363, C366, and C370 each contribute to the [4Fe-4S] cluster site.

This sequence belongs to the LutB/YkgF family.

Functionally, is involved in L-lactate degradation and allows cells to grow with lactate as the sole carbon source. Has probably a role as an electron transporter during oxidation of L-lactate. This chain is Lactate utilization protein B 1, found in Bacillus mycoides (strain KBAB4) (Bacillus weihenstephanensis).